An 824-amino-acid polypeptide reads, in one-letter code: LPS-assembly protein LptD (824 aa).

Disordered stretches follow at residues 1–26 (MTEQ…RRVR) and 67–117 (TQTP…PAYV). A signal peptide spans 1-48 (MTEQRRSPHHPATRPPAPPGTSRRVRLPASALRPLVLAMAGLTVSAHA). Residues 98-115 (NTLNLSPSSTPSNPNAPA) are compositionally biased toward low complexity.

The protein belongs to the LptD family. In terms of assembly, component of the lipopolysaccharide transport and assembly complex. Interacts with LptE and LptA.

The protein localises to the cell outer membrane. Together with LptE, is involved in the assembly of lipopolysaccharide (LPS) at the surface of the outer membrane. The protein is LPS-assembly protein LptD of Cupriavidus metallidurans (strain ATCC 43123 / DSM 2839 / NBRC 102507 / CH34) (Ralstonia metallidurans).